A 180-amino-acid chain; its full sequence is Secreted RxLR effector protein 19 (180 aa).

A signal peptide spans 1-19; sequence MKLLLRALATFVLLNGVDS. Residues 25–171 form the Jacalin-type lectin domain; it reads FQKCNVTGGP…IFALGALWGP (147 aa). Residues 52 to 77 carry the RxLR-dEER motif; that stretch reads RALRLCGVDFVDGIGVTIWDLSVEEN.

This sequence belongs to the RxLR effector family.

The protein resides in the secreted. The protein localises to the host cytoplasm. Its subcellular location is the host nucleus. Its function is as follows. Effector that partially suppresses the tobacco programmed cell death induced by cell death-inducing proteins. The sequence is that of Secreted RxLR effector protein 19 from Plasmopara viticola (Downy mildew of grapevine).